A 526-amino-acid chain; its full sequence is Glutamyl-tRNA(Gln) amidotransferase subunit A, mitochondrial (526 aa).

Lysine 76 acts as the Charge relay system in catalysis. Positions 147 to 166 are disordered; the sequence is QYREKRKQNSHSENEDSNWL. Serine 171 (charge relay system) is an active-site residue. Serine 195 serves as the catalytic Acyl-ester intermediate.

This sequence belongs to the amidase family. GatA subfamily. As to quaternary structure, subunit of the heterotrimeric GatCAB amidotransferase (AdT) complex, composed of A (QRSL1), B (GATB) and C (GATC) subunits.

Its subcellular location is the mitochondrion. It catalyses the reaction L-glutamyl-tRNA(Gln) + L-glutamine + ATP + H2O = L-glutaminyl-tRNA(Gln) + L-glutamate + ADP + phosphate + H(+). Its function is as follows. Allows the formation of correctly charged Gln-tRNA(Gln) through the transamidation of misacylated Glu-tRNA(Gln) in the mitochondria. The reaction takes place in the presence of glutamine and ATP through an activated gamma-phospho-Glu-tRNA(Gln). This chain is Glutamyl-tRNA(Gln) amidotransferase subunit A, mitochondrial, found in Bos taurus (Bovine).